The primary structure comprises 957 residues: Glycine dehydrogenase (decarboxylating) (957 aa).

Lysine 704 carries the post-translational modification N6-(pyridoxal phosphate)lysine.

It belongs to the GcvP family. The glycine cleavage system is composed of four proteins: P, T, L and H. Requires pyridoxal 5'-phosphate as cofactor.

The enzyme catalyses N(6)-[(R)-lipoyl]-L-lysyl-[glycine-cleavage complex H protein] + glycine + H(+) = N(6)-[(R)-S(8)-aminomethyldihydrolipoyl]-L-lysyl-[glycine-cleavage complex H protein] + CO2. Functionally, the glycine cleavage system catalyzes the degradation of glycine. The P protein binds the alpha-amino group of glycine through its pyridoxal phosphate cofactor; CO(2) is released and the remaining methylamine moiety is then transferred to the lipoamide cofactor of the H protein. The sequence is that of Glycine dehydrogenase (decarboxylating) from Bordetella petrii (strain ATCC BAA-461 / DSM 12804 / CCUG 43448).